A 964-amino-acid polypeptide reads, in one-letter code: uncharacterized protein (964 aa).

Positions 97 to 117 (DSESDVGSDAESDAESDAESD) are enriched in acidic residues. Residues 97–208 (DSESDVGSDA…SNSIDNESES (112 aa)) form a disordered region. The segment covering 121 to 148 (HTQNNTNTPINNITLINLDSSNNSTQSD) has biased composition (low complexity). Residues 149 to 163 (NESDNESDNESDNES) are compositionally biased toward acidic residues. Low complexity predominate over residues 192–203 (NSDNIGNSNSID).

This is an uncharacterized protein from Acanthamoeba polyphaga (Amoeba).